Consider the following 417-residue polypeptide: Zinc-finger homeodomain protein 4 (417 aa).

The segment covering 1–12 has biased composition (polar residues); the sequence is MVSILQLQTRTE. Disordered stretches follow at residues 1-22 and 31-50; these read MVSILQLQTRTEASPASSASAA and RQQQEQEGEEEEEEFEFQER. The segment covering 13–22 has biased composition (low complexity); that stretch reads ASPASSASAA. Residues 36–46 show a composition bias toward acidic residues; the sequence is QEGEEEEEEFE. The ZF-HD dimerization-type; degenerate zinc finger occupies 145–194; sequence YRECLKNHAAAIGGNATDGCGEFMPSGEEGSLEALKCSACGCHRNFHRKE. 2 disordered regions span residues 281 to 309 and 361 to 417; these read DEMDVSGGGGGVGRGGGSSSSSKKRFRTK and NLAK…LKLE. Residues 286–298 show a composition bias toward gly residues; sequence SGGGGGVGRGGGS. Positions 303–366 form a DNA-binding region, homeobox; that stretch reads KKRFRTKFTA…NNKHNLAKKP (64 aa). Over residues 368–417 the composition is skewed to pro residues; it reads PSSPPPPPQIPPMSMPPSPPPPQIPPMSMPPSPPPMPMPMPPSPPQLKLE.

Homo- and heterodimer with other ZFHD proteins.

It is found in the nucleus. Functionally, putative transcription factor. The polypeptide is Zinc-finger homeodomain protein 4 (ZHD4) (Oryza sativa subsp. japonica (Rice)).